The primary structure comprises 380 residues: Cytochrome b (380 aa).

4 helical membrane-spanning segments follow: residues 33-53, 77-98, 113-133, and 178-198; these read LGSLLGTCLVLQIVTGLFLAM, WVIRYLHANGASMFFICLFLHI, WNIGIILLLATMATAFMGYVL, and FFTFHFILPFIITALVALHLL. Residues His-83 and His-97 each contribute to the heme b site. Residues His-182 and His-196 each coordinate heme b. Position 201 (His-201) interacts with a ubiquinone. Transmembrane regions (helical) follow at residues 226–246, 288–308, 320–340, and 347–367; these read TKDILGLFLLLLTLMSLVLFS, LGGVLALLLSILILMTIPMLH, LSQLTYWLWAANLLTLTWIGG, and FITIGQVTSVLYFITILILVP.

Belongs to the cytochrome b family. The cytochrome bc1 complex contains 11 subunits: 3 respiratory subunits (MT-CYB, CYC1 and UQCRFS1), 2 core proteins (UQCRC1 and UQCRC2) and 6 low-molecular weight proteins (UQCRH/QCR6, UQCRB/QCR7, UQCRQ/QCR8, UQCR10/QCR9, UQCR11/QCR10 and a cleavage product of UQCRFS1). This cytochrome bc1 complex then forms a dimer. Heme b is required as a cofactor.

The protein resides in the mitochondrion inner membrane. Component of the ubiquinol-cytochrome c reductase complex (complex III or cytochrome b-c1 complex) that is part of the mitochondrial respiratory chain. The b-c1 complex mediates electron transfer from ubiquinol to cytochrome c. Contributes to the generation of a proton gradient across the mitochondrial membrane that is then used for ATP synthesis. The sequence is that of Cytochrome b (MT-CYB) from Nomascus leucogenys (Northern white-cheeked gibbon).